Reading from the N-terminus, the 359-residue chain is Phosphoserine aminotransferase (359 aa).

Arg-41 contacts L-glutamate. Pyridoxal 5'-phosphate is bound by residues 75–76 (AS), Trp-101, Thr-152, Asp-171, and Gln-194. Lys-195 is modified (N6-(pyridoxal phosphate)lysine). 236–237 (NT) provides a ligand contact to pyridoxal 5'-phosphate.

Belongs to the class-V pyridoxal-phosphate-dependent aminotransferase family. SerC subfamily. In terms of assembly, homodimer. The cofactor is pyridoxal 5'-phosphate.

The protein localises to the cytoplasm. It carries out the reaction O-phospho-L-serine + 2-oxoglutarate = 3-phosphooxypyruvate + L-glutamate. The catalysed reaction is 4-(phosphooxy)-L-threonine + 2-oxoglutarate = (R)-3-hydroxy-2-oxo-4-phosphooxybutanoate + L-glutamate. The protein operates within amino-acid biosynthesis; L-serine biosynthesis; L-serine from 3-phospho-D-glycerate: step 2/3. Its pathway is cofactor biosynthesis; pyridoxine 5'-phosphate biosynthesis; pyridoxine 5'-phosphate from D-erythrose 4-phosphate: step 3/5. Catalyzes the reversible conversion of 3-phosphohydroxypyruvate to phosphoserine and of 3-hydroxy-2-oxo-4-phosphonooxybutanoate to phosphohydroxythreonine. In Acinetobacter baumannii (strain ACICU), this protein is Phosphoserine aminotransferase.